The chain runs to 1381 residues: DNA-directed RNA polymerase subunit beta'' (1381 aa).

Zn(2+)-binding residues include C224, C295, C302, and C305.

It belongs to the RNA polymerase beta' chain family. RpoC2 subfamily. In plastids the minimal PEP RNA polymerase catalytic core is composed of four subunits: alpha, beta, beta', and beta''. When a (nuclear-encoded) sigma factor is associated with the core the holoenzyme is formed, which can initiate transcription. Requires Zn(2+) as cofactor.

The protein resides in the plastid. The protein localises to the chloroplast. It catalyses the reaction RNA(n) + a ribonucleoside 5'-triphosphate = RNA(n+1) + diphosphate. Its function is as follows. DNA-dependent RNA polymerase catalyzes the transcription of DNA into RNA using the four ribonucleoside triphosphates as substrates. This is DNA-directed RNA polymerase subunit beta'' from Lactuca sativa (Garden lettuce).